The following is a 342-amino-acid chain: Oxygen-dependent coproporphyrinogen-III oxidase (342 aa).

Ser-98 contributes to the substrate binding site. His-102 and His-112 together coordinate a divalent metal cation. His-112 serves as the catalytic Proton donor. Residue 114 to 116 coordinates substrate; the sequence is NYR. His-146 and His-176 together coordinate a divalent metal cation. Residues 266-301 form an important for dimerization region; the sequence is YVEFNLVWDRGTIFGLQTNGRTESILMSLPPLARWE.

The protein belongs to the aerobic coproporphyrinogen-III oxidase family. In terms of assembly, homodimer. A divalent metal cation is required as a cofactor.

The protein localises to the cytoplasm. The catalysed reaction is coproporphyrinogen III + O2 + 2 H(+) = protoporphyrinogen IX + 2 CO2 + 2 H2O. Its pathway is porphyrin-containing compound metabolism; protoporphyrin-IX biosynthesis; protoporphyrinogen-IX from coproporphyrinogen-III (O2 route): step 1/1. Involved in the heme and chlorophyll biosynthesis. Catalyzes the aerobic oxidative decarboxylation of propionate groups of rings A and B of coproporphyrinogen-III to yield the vinyl groups in protoporphyrinogen-IX. In Prochlorococcus marinus subsp. pastoris (strain CCMP1986 / NIES-2087 / MED4), this protein is Oxygen-dependent coproporphyrinogen-III oxidase.